The following is a 271-amino-acid chain: Cyclase-like protein 3 (271 aa).

Positions Met-1 to Ala-21 are cleaved as a signal peptide.

The protein belongs to the Cyclase 1 superfamily.

It is found in the secreted. It localises to the extracellular space. The protein localises to the extracellular matrix. The chain is Cyclase-like protein 3 from Arabidopsis thaliana (Mouse-ear cress).